A 384-amino-acid chain; its full sequence is Ribosomal RNA large subunit methyltransferase G (384 aa).

It belongs to the methyltransferase superfamily. RlmG family.

It localises to the cytoplasm. It carries out the reaction guanosine(1835) in 23S rRNA + S-adenosyl-L-methionine = N(2)-methylguanosine(1835) in 23S rRNA + S-adenosyl-L-homocysteine + H(+). In terms of biological role, specifically methylates the guanine in position 1835 (m2G1835) of 23S rRNA. The sequence is that of Ribosomal RNA large subunit methyltransferase G from Streptomyces griseus subsp. griseus (strain JCM 4626 / CBS 651.72 / NBRC 13350 / KCC S-0626 / ISP 5235).